Here is a 282-residue protein sequence, read N- to C-terminus: Shikimate dehydrogenase (NADP(+)) (282 aa).

Residues 19–21 (TQS) and T66 contribute to the shikimate site. The active-site Proton acceptor is K70. 2 residues coordinate shikimate: N91 and D107. NADP(+) is bound by residues 132-136 (GAGGA), 155-160 (NRTITR), I224, and G246.

It belongs to the shikimate dehydrogenase family. As to quaternary structure, homodimer.

The catalysed reaction is shikimate + NADP(+) = 3-dehydroshikimate + NADPH + H(+). Its pathway is metabolic intermediate biosynthesis; chorismate biosynthesis; chorismate from D-erythrose 4-phosphate and phosphoenolpyruvate: step 4/7. Its function is as follows. Involved in the biosynthesis of the chorismate, which leads to the biosynthesis of aromatic amino acids. Catalyzes the reversible NADPH linked reduction of 3-dehydroshikimate (DHSA) to yield shikimate (SA). The sequence is that of Shikimate dehydrogenase (NADP(+)) from Buchnera aphidicola subsp. Baizongia pistaciae (strain Bp).